The following is a 478-amino-acid chain: Phosphoglycerate kinase 2, chloroplastic (478 aa).

Residues 1-74 constitute a chloroplast transit peptide; that stretch reads MASTAATAAL…GKGARGVITM (74 aa). Serine 78 is subject to Phosphoserine. Alanine 96, aspartate 97, asparagine 99, arginine 113, threonine 135, histidine 136, glycine 138, arginine 139, arginine 194, histidine 226, and arginine 227 together coordinate (2R)-3-phosphoglycerate. Residue glycine 272 coordinates ADP. Position 272 (glycine 272) interacts with CDP. AMP contacts are provided by lysine 274 and lysine 278. ATP is bound at residue lysine 278. ADP is bound at residue glycine 296. Residue glycine 296 coordinates CDP. AMP contacts are provided by glycine 297 and glycine 369. Residues glycine 297 and glycine 369 each contribute to the ATP site. CDP is bound by residues glycine 394 and phenylalanine 399. ADP is bound at residue phenylalanine 399. Residue glutamate 400 coordinates AMP. Residues glutamate 400, aspartate 431, and serine 432 each coordinate ATP. Aspartate 431 is a binding site for Mg(2+).

It belongs to the phosphoglycerate kinase family. In terms of assembly, monomer. The cofactor is Mg(2+).

The protein localises to the plastid. It localises to the chloroplast. The enzyme catalyses (2R)-3-phosphoglycerate + ATP = (2R)-3-phospho-glyceroyl phosphate + ADP. It functions in the pathway carbohydrate biosynthesis; Calvin cycle. This chain is Phosphoglycerate kinase 2, chloroplastic, found in Arabidopsis thaliana (Mouse-ear cress).